Reading from the N-terminus, the 264-residue chain is Glutamate racemase (264 aa).

Residues D10–S11 and Y42–G43 contribute to the substrate site. C73 functions as the Proton donor/acceptor in the catalytic mechanism. N74–T75 provides a ligand contact to substrate. C183 acts as the Proton donor/acceptor in catalysis. A substrate-binding site is contributed by T184–H185.

The protein belongs to the aspartate/glutamate racemases family.

The enzyme catalyses L-glutamate = D-glutamate. It functions in the pathway cell wall biogenesis; peptidoglycan biosynthesis. Functionally, provides the (R)-glutamate required for cell wall biosynthesis. The protein is Glutamate racemase of Streptococcus gordonii (strain Challis / ATCC 35105 / BCRC 15272 / CH1 / DL1 / V288).